A 527-amino-acid chain; its full sequence is Peptide chain release factor 3 (527 aa).

Residues 11–278 enclose the tr-type G domain; sequence AKRRTFAIIS…GFVEWAPPPL (268 aa). GTP-binding positions include 20–27, 87–91, and 141–144; these read SHPDAGKT, DTPGH, and NKMD.

The protein belongs to the TRAFAC class translation factor GTPase superfamily. Classic translation factor GTPase family. PrfC subfamily.

The protein resides in the cytoplasm. In terms of biological role, increases the formation of ribosomal termination complexes and stimulates activities of RF-1 and RF-2. It binds guanine nucleotides and has strong preference for UGA stop codons. It may interact directly with the ribosome. The stimulation of RF-1 and RF-2 is significantly reduced by GTP and GDP, but not by GMP. This Saccharophagus degradans (strain 2-40 / ATCC 43961 / DSM 17024) protein is Peptide chain release factor 3.